Reading from the N-terminus, the 175-residue chain is MSTIAKDQTQINDKIRAKELRLISQDGEQIGVKSKREALEMAERVDLDLVVVAPNAKPPVARIMDYGKFKFEQQKKEKEMKKKQKIINVKEIRLSPTIEEHDFQTKLKNGRKFLTKGDKCKVSIRFRGRAITHKEIGQRVLEKYADECKDIATVEQKPKMDGRQMFIMLAPTAEK.

It belongs to the IF-3 family. Monomer.

It is found in the cytoplasm. Functionally, IF-3 binds to the 30S ribosomal subunit and shifts the equilibrium between 70S ribosomes and their 50S and 30S subunits in favor of the free subunits, thus enhancing the availability of 30S subunits on which protein synthesis initiation begins. The polypeptide is Translation initiation factor IF-3 (Staphylococcus aureus (strain MRSA252)).